A 617-amino-acid polypeptide reads, in one-letter code: BPI fold-containing family B member 4 (617 aa).

A signal peptide spans 1–17 (MWTAWCVAALSVAAVCG). The disordered stretch occupies residues 124–149 (RPSDSAYHRGPGRYRSAADPSSAGRL). N-linked (GlcNAc...) asparagine glycosylation is present at Asn275. A disulfide bridge connects residues Cys297 and Cys334.

Belongs to the BPI/LBP/Plunc superfamily. BPI/LBP family. Highly expressed in olfactory mucosa but undetectable in thymus, kidney, lung, brain, spleen and liver.

The protein resides in the secreted. It localises to the cytoplasm. Its function is as follows. May have the capacity to recognize and bind specific classes of odorants. May act as a carrier molecule, transporting odorants across the mucus layer to access receptor sites. May serve as a primary defense mechanism by recognizing and removing potentially harmful odorants or pathogenic microorganisms from the mucosa or clearing excess odorant from mucus to enable new odorant stimuli to be received. The protein is BPI fold-containing family B member 4 (Bpifb4) of Rattus norvegicus (Rat).